Reading from the N-terminus, the 370-residue chain is Dual-specificity RNA methyltransferase RlmN (370 aa).

Glutamate 93 functions as the Proton acceptor in the catalytic mechanism. In terms of domain architecture, Radical SAM core spans 99–331; it reads DRKRGTLCVS…TRVRRTRGDD (233 aa). The cysteines at positions 106 and 336 are disulfide-linked. Residues cysteine 113, cysteine 117, and cysteine 120 each contribute to the [4Fe-4S] cluster site. Residues 162-163, serine 194, 216-218, and asparagine 293 contribute to the S-adenosyl-L-methionine site; these read GE and SLH. Cysteine 336 acts as the S-methylcysteine intermediate in catalysis.

Belongs to the radical SAM superfamily. RlmN family. [4Fe-4S] cluster serves as cofactor.

The protein resides in the cytoplasm. The catalysed reaction is adenosine(2503) in 23S rRNA + 2 reduced [2Fe-2S]-[ferredoxin] + 2 S-adenosyl-L-methionine = 2-methyladenosine(2503) in 23S rRNA + 5'-deoxyadenosine + L-methionine + 2 oxidized [2Fe-2S]-[ferredoxin] + S-adenosyl-L-homocysteine. It carries out the reaction adenosine(37) in tRNA + 2 reduced [2Fe-2S]-[ferredoxin] + 2 S-adenosyl-L-methionine = 2-methyladenosine(37) in tRNA + 5'-deoxyadenosine + L-methionine + 2 oxidized [2Fe-2S]-[ferredoxin] + S-adenosyl-L-homocysteine. Its function is as follows. Specifically methylates position 2 of adenine 2503 in 23S rRNA and position 2 of adenine 37 in tRNAs. m2A2503 modification seems to play a crucial role in the proofreading step occurring at the peptidyl transferase center and thus would serve to optimize ribosomal fidelity. This is Dual-specificity RNA methyltransferase RlmN from Coxiella burnetii (strain CbuK_Q154) (Coxiella burnetii (strain Q154)).